A 216-amino-acid chain; its full sequence is Octanoyltransferase (216 aa).

The BPL/LPL catalytic domain occupies Lys-24 to Asn-212. Substrate is bound by residues Arg-69–His-76, Ser-140–Gly-142, and Gly-153–Ala-155. Residue Cys-171 is the Acyl-thioester intermediate of the active site.

The protein belongs to the LipB family.

The protein localises to the cytoplasm. It carries out the reaction octanoyl-[ACP] + L-lysyl-[protein] = N(6)-octanoyl-L-lysyl-[protein] + holo-[ACP] + H(+). It participates in protein modification; protein lipoylation via endogenous pathway; protein N(6)-(lipoyl)lysine from octanoyl-[acyl-carrier-protein]: step 1/2. Its function is as follows. Catalyzes the transfer of endogenously produced octanoic acid from octanoyl-acyl-carrier-protein onto the lipoyl domains of lipoate-dependent enzymes. Lipoyl-ACP can also act as a substrate although octanoyl-ACP is likely to be the physiological substrate. In Leptospira interrogans serogroup Icterohaemorrhagiae serovar Lai (strain 56601), this protein is Octanoyltransferase.